The chain runs to 329 residues: Malate dehydrogenase (329 aa).

NAD(+) is bound at residue 12–18; the sequence is GAAGQIG. Residues Arg93 and Arg99 each coordinate substrate. Residues Asn106, Gln113, and 130–132 each bind NAD(+); that span reads TGN. Asn132 and Arg163 together coordinate substrate. Catalysis depends on His188, which acts as the Proton acceptor.

It belongs to the LDH/MDH superfamily. MDH type 2 family.

The enzyme catalyses (S)-malate + NAD(+) = oxaloacetate + NADH + H(+). In terms of biological role, catalyzes the reversible oxidation of malate to oxaloacetate. In Mycobacterium leprae (strain TN), this protein is Malate dehydrogenase.